We begin with the raw amino-acid sequence, 443 residues long: Threonine/serine transporter TdcC (443 aa).

11 helical membrane-spanning segments follow: residues 22–42 (TTWT…FFPI), 44–64 (AGFG…PIAF), 97–117 (GVVI…IYGV), 140–160 (VVAL…KDLM), 163–183 (VMSY…LSLI), 207–227 (ILVT…FSPI), 259–279 (ASML…FTLS), 319–339 (ASII…LGTL), 366–386 (ISMI…PNIL), 389–409 (IEAM…MYAI), and 423–443 (DNVF…YKLF).

The protein belongs to the amino acid/polyamine transporter 2 family. SdaC/TdcC subfamily.

Its subcellular location is the cell inner membrane. It catalyses the reaction L-threonine(in) + H(+)(in) = L-threonine(out) + H(+)(out). The catalysed reaction is L-serine(in) + H(+)(in) = L-serine(out) + H(+)(out). Involved in the import of threonine and serine into the cell, with the concomitant import of a proton (symport system). The chain is Threonine/serine transporter TdcC from Salmonella arizonae (strain ATCC BAA-731 / CDC346-86 / RSK2980).